We begin with the raw amino-acid sequence, 384 residues long: Beta-glucuronosyltransferase GlcAT14C (384 aa).

The Cytoplasmic portion of the chain corresponds to 1–11; sequence MKRSHISSPRS. A signal-anchor for type II membrane protein membrane pass occupies residues 12–34; sequence YSRPAISIFGVFLLFLLVLTLSS. The Lumenal portion of the chain corresponds to 35 to 384; sequence RKPSDSSSGL…HENFRAKQCK (350 aa). Asparagine 156, asparagine 285, and asparagine 306 each carry an N-linked (GlcNAc...) asparagine glycan.

This sequence belongs to the glycosyltransferase 14 family.

The protein resides in the golgi apparatus membrane. Functionally, beta-glucuronosyltransferase involved in the biosynthesis of type II arabinogalactan (AG). Modifies both the beta-1,6-linked galactan and beta-1,3-linked galactan present in type II AG. The polypeptide is Beta-glucuronosyltransferase GlcAT14C (Arabidopsis thaliana (Mouse-ear cress)).